The following is a 440-amino-acid chain: Tripartite motif-containing protein 14 (440 aa).

A B box-type zinc finger spans residues 17-59 (AYGWRCPEHSERPAELFCRRCGRCVCALCPVLGAHRGHPVGLA). Positions 22, 25, 45, and 51 each coordinate Zn(2+). The 194-residue stretch at 247-440 (ALLKTSPSPE…EGPISIPRLP (194 aa)) folds into the B30.2/SPRY domain.

This sequence belongs to the TRIM/RBCC family. As to quaternary structure, interacts with MAVS. Interacts with WRNIP1 and PPP6C; these interactions positively regulate the RIG-I signaling pathway. Interacts with CGAS; this interaction stabilizes CGAS and promotes type I interferon production. Interacts with USP14; this interaction mediates the cleavage of 'Lys-48'-linked ubiquitination of CGAS. Interacts with TBK1. Interacts with SPI1. Interacts with KDM4D and USP14. Ubiquitinated. Undergoes 'Lys-63'-linked polyubiquitination; this modification allows IKBKG/NEMO recruitment to MAVS. Undergoes 'Lys-48'-linked polyubiquitination by RNF125; this modification mediates its degradation via the ubiquitin-proteasome pathway. As to expression, expressed with high level in spleen, thymus, liver and testis. Expressed with low level in the brain, kidney, and skeletal muscle. Expressed in various differentiation stages of B-lymphocytes.

The protein resides in the mitochondrion outer membrane. The protein localises to the cytoplasmic vesicle. Its subcellular location is the phagosome. Functionally, plays a role in the innate immune defense against viruses. Facilitates the type I IFN response by interacting with MAVS at the outer mitochondria membrane and thereby recruiting NF-kappa-B essential modulator IKBKG/NEMO to the MAVS signalosome, leading to the activation of both the IFN regulatory factor 3/IRF3 and NF-kappa-B pathways. Positively regulates the CGAS-induced type I interferon signaling pathway by stabilizing CGAS and inhibiting its autophagic degradation. Inhibits the transcriptional activity of SPI1 in a dose-dependent manner. Also inhibits OPTN-mediated selective autophagic degradation of KDM4D and thereby negatively regulates H3K9me2 and H3K9me3. Mechanistically, recruits USP14 to remove the 'Lys-63'-linked ubiquitination of KDM4D, preventing its recognition by OPTN and subsequent degradation. Plays an essential role in the innate immune defense against viruses and bacteria. Facilitates the type I IFN response by interacting with MAVS at the outer mitochondria membrane and thereby recruiting NF-kappa-B essential modulator IKBKG/NEMO to the MAVS signalosome, leading to the activation of both the IFN regulatory factor 3/IRF3 and NF-kappa-B pathways. Positively regulates the CGAS-induced type I interferon signaling pathway by stabilizing CGAS and inhibiting its autophagic degradation. Acts as a scaffold between TBK1 and STAT3 to promote phosphorylation of STAT3 and resolve interferon-stimulated gene (ISG) expression. Inhibits the transcriptional activity of SPI1 in a dose-dependent manner. The chain is Tripartite motif-containing protein 14 (Trim14) from Mus musculus (Mouse).